The primary structure comprises 364 residues: Ribosomal RNA large subunit methyltransferase F (364 aa).

Residues 1 to 17 (MPKPAIKTAAKPATSSA) are compositionally biased toward low complexity. The interval 1 to 53 (MPKPAIKTAAKPATSSAGKRGKPNTPKSVAKPKTAKPKTASKPKVKPGEKKRL) is disordered. Residues 33–53 (KTAKPKTASKPKVKPGEKKRL) are compositionally biased toward basic residues.

This sequence belongs to the methyltransferase superfamily. METTL16/RlmF family.

It is found in the cytoplasm. It catalyses the reaction adenosine(1618) in 23S rRNA + S-adenosyl-L-methionine = N(6)-methyladenosine(1618) in 23S rRNA + S-adenosyl-L-homocysteine + H(+). Specifically methylates the adenine in position 1618 of 23S rRNA. The chain is Ribosomal RNA large subunit methyltransferase F from Shewanella sp. (strain MR-7).